A 543-amino-acid chain; its full sequence is Hydroxylamine reductase (543 aa).

Positions 5, 8, 17, and 23 each coordinate [4Fe-4S] cluster. The hybrid [4Fe-2O-2S] cluster site is built by H250, E274, C318, C410, C438, C463, E498, and K500. C410 bears the Cysteine persulfide mark.

This sequence belongs to the HCP family. [4Fe-4S] cluster is required as a cofactor. Hybrid [4Fe-2O-2S] cluster serves as cofactor.

It is found in the cytoplasm. It catalyses the reaction A + NH4(+) + H2O = hydroxylamine + AH2 + H(+). Its function is as follows. Catalyzes the reduction of hydroxylamine to form NH(3) and H(2)O. The protein is Hydroxylamine reductase of Petrotoga mobilis (strain DSM 10674 / SJ95).